The primary structure comprises 338 residues: Anthranilate phosphoribosyltransferase (338 aa).

5-phospho-alpha-D-ribose 1-diphosphate-binding positions include G81, G84–D85, T89, N91–T94, K109–S117, and S121. G81 serves as a coordination point for anthranilate. S93 contributes to the Mg(2+) binding site. N112 contributes to the anthranilate binding site. An anthranilate-binding site is contributed by R167. The Mg(2+) site is built by D226 and E227.

Belongs to the anthranilate phosphoribosyltransferase family. As to quaternary structure, homodimer. Mg(2+) serves as cofactor.

It catalyses the reaction N-(5-phospho-beta-D-ribosyl)anthranilate + diphosphate = 5-phospho-alpha-D-ribose 1-diphosphate + anthranilate. It functions in the pathway amino-acid biosynthesis; L-tryptophan biosynthesis; L-tryptophan from chorismate: step 2/5. Functionally, catalyzes the transfer of the phosphoribosyl group of 5-phosphorylribose-1-pyrophosphate (PRPP) to anthranilate to yield N-(5'-phosphoribosyl)-anthranilate (PRA). The protein is Anthranilate phosphoribosyltransferase of Acidithiobacillus ferrooxidans (strain ATCC 23270 / DSM 14882 / CIP 104768 / NCIMB 8455) (Ferrobacillus ferrooxidans (strain ATCC 23270)).